The chain runs to 171 residues: Small ribosomal subunit protein uS5 (171 aa).

Residues 16 to 79 (LVERLVTVDR…EAAKRNMITV (64 aa)) enclose the S5 DRBM domain.

It belongs to the universal ribosomal protein uS5 family. In terms of assembly, part of the 30S ribosomal subunit. Contacts proteins S4 and S8.

With S4 and S12 plays an important role in translational accuracy. Functionally, located at the back of the 30S subunit body where it stabilizes the conformation of the head with respect to the body. The sequence is that of Small ribosomal subunit protein uS5 from Psychrobacter arcticus (strain DSM 17307 / VKM B-2377 / 273-4).